The sequence spans 229 residues: Cytidylate kinase (229 aa).

Position 12-20 (12-20) interacts with ATP; the sequence is GPSGSGKGT.

This sequence belongs to the cytidylate kinase family. Type 1 subfamily.

It is found in the cytoplasm. The enzyme catalyses CMP + ATP = CDP + ADP. The catalysed reaction is dCMP + ATP = dCDP + ADP. This is Cytidylate kinase from Pseudomonas fluorescens (strain ATCC BAA-477 / NRRL B-23932 / Pf-5).